We begin with the raw amino-acid sequence, 93 residues long: Integration host factor subunit beta (93 aa).

The protein belongs to the bacterial histone-like protein family. As to quaternary structure, heterodimer of an alpha and a beta chain.

In terms of biological role, this protein is one of the two subunits of integration host factor, a specific DNA-binding protein that functions in genetic recombination as well as in transcriptional and translational control. In Vibrio vulnificus (strain YJ016), this protein is Integration host factor subunit beta.